The sequence spans 796 residues: uncharacterized protein (796 aa).

It localises to the mitochondrion. This is an uncharacterized protein from Dictyostelium discoideum (Social amoeba).